The primary structure comprises 67 residues: Probable Sec-independent protein translocase protein TatE (67 aa).

A helical membrane pass occupies residues 1 to 21; the sequence is MGEISITKLLVVAALVVLLFG. Residues 45 to 67 are disordered; it reads DEDAGAKKDANGDLPAEKLTHKE.

The protein belongs to the TatA/E family. TatE subfamily.

The protein localises to the cell inner membrane. Its function is as follows. Part of the twin-arginine translocation (Tat) system that transports large folded proteins containing a characteristic twin-arginine motif in their signal peptide across membranes. TatE shares overlapping functions with TatA. This is Probable Sec-independent protein translocase protein TatE from Escherichia fergusonii (strain ATCC 35469 / DSM 13698 / CCUG 18766 / IAM 14443 / JCM 21226 / LMG 7866 / NBRC 102419 / NCTC 12128 / CDC 0568-73).